Reading from the N-terminus, the 473-residue chain is tRNA modification GTPase MnmE (473 aa).

(6S)-5-formyl-5,6,7,8-tetrahydrofolate is bound by residues arginine 31, glutamate 95, and arginine 134. In terms of domain architecture, TrmE-type G spans glycine 230–lysine 394. Residues asparagine 240–threonine 245, serine 259–threonine 265, and aspartate 284–glycine 287 each bind GTP. Mg(2+) contacts are provided by serine 244 and threonine 265. Lysine 473 provides a ligand contact to (6S)-5-formyl-5,6,7,8-tetrahydrofolate.

This sequence belongs to the TRAFAC class TrmE-Era-EngA-EngB-Septin-like GTPase superfamily. TrmE GTPase family. Homodimer. Heterotetramer of two MnmE and two MnmG subunits. It depends on K(+) as a cofactor.

It localises to the cytoplasm. In terms of biological role, exhibits a very high intrinsic GTPase hydrolysis rate. Involved in the addition of a carboxymethylaminomethyl (cmnm) group at the wobble position (U34) of certain tRNAs, forming tRNA-cmnm(5)s(2)U34. The polypeptide is tRNA modification GTPase MnmE (Chlorobaculum tepidum (strain ATCC 49652 / DSM 12025 / NBRC 103806 / TLS) (Chlorobium tepidum)).